The primary structure comprises 187 residues: Protein GrpE (187 aa).

The tract at residues 1–31 (MEKKETKNDAEKNNKQDNKSTKSQKKENLNL) is disordered.

It belongs to the GrpE family. Homodimer.

The protein resides in the cytoplasm. Participates actively in the response to hyperosmotic and heat shock by preventing the aggregation of stress-denatured proteins, in association with DnaK and GrpE. It is the nucleotide exchange factor for DnaK and may function as a thermosensor. Unfolded proteins bind initially to DnaJ; upon interaction with the DnaJ-bound protein, DnaK hydrolyzes its bound ATP, resulting in the formation of a stable complex. GrpE releases ADP from DnaK; ATP binding to DnaK triggers the release of the substrate protein, thus completing the reaction cycle. Several rounds of ATP-dependent interactions between DnaJ, DnaK and GrpE are required for fully efficient folding. The polypeptide is Protein GrpE (Borrelia garinii subsp. bavariensis (strain ATCC BAA-2496 / DSM 23469 / PBi) (Borreliella bavariensis)).